The following is a 222-amino-acid chain: Putative ankyrin repeat protein L36 (222 aa).

ANK repeat units lie at residues 1-14, 15-44, 45-74, 76-104, 105-134, 136-161, and 163-191; these read MVKYLVAQGVNVDA, QNSRALCLACKYGYINIAYFLMHEGANIYA, NDNHPIRLAAEYGHLSIVKLLIYHNANIRA, EDSALRMAAKRNKLEVVKYIIEKIGTNYE, YSDYPLAYAAGKGHIEMIEYLLSIGEKITD, AMFMAINNGHVGTVKYLIDESQSLPC, and SYSELAKITRKGHLEMIKLLNNRGIKINK.

The polypeptide is Putative ankyrin repeat protein L36 (Acanthamoeba polyphaga (Amoeba)).